The primary structure comprises 172 residues: Co-chaperone protein HscB (172 aa).

The J domain maps to 2–74 (DYFTLFGLPI…LKRAEYMLSL (73 aa)).

Belongs to the HscB family. Interacts with HscA and stimulates its ATPase activity. Interacts with IscU.

Functionally, co-chaperone involved in the maturation of iron-sulfur cluster-containing proteins. Seems to help targeting proteins to be folded toward HscA. This is Co-chaperone protein HscB from Pectobacterium carotovorum subsp. carotovorum (strain PC1).